We begin with the raw amino-acid sequence, 318 residues long: AT-hook motif nuclear-localized protein 7 (318 aa).

Disordered regions lie at residues 1–76 (METS…PSSS) and 241–318 (SDQQ…LPVD). A Bipartite nuclear localization signal motif is present at residues 56 to 64 (KKRRGRPRK). A DNA-binding region (a.T hook) is located at residues 56–68 (KKRRGRPRKYEAN). The PPC domain occupies 120–259 (GSNFTPHVIT…RKQRVEHAPA (140 aa)). Over residues 243-256 (QQDHQKPRKQRVEH) the composition is skewed to basic and acidic residues. The span at 264–274 (VPPPPSPPPPA) shows a compositional bias: pro residues. Over residues 288–312 (PPSSFGISSWTNGQDMPRNSATDIN) the composition is skewed to polar residues.

The protein localises to the nucleus. Its function is as follows. Transcription factor that specifically binds AT-rich DNA sequences related to the nuclear matrix attachment regions (MARs). The chain is AT-hook motif nuclear-localized protein 7 from Arabidopsis thaliana (Mouse-ear cress).